The following is a 437-amino-acid chain: MLLLLARCFLVILASSLLVCPGLACGPGRGFGKRRHPKKLTPLAYKQFIPNVAEKTLGASGRYEGKITRNSERFKELTPNYNPDIIFKDEENTGADRLMTQRCKDKLNALAISVMNQWPGVKLRVTEGWDEDGHHSEESLHYEGRAVDITTSDRDRSKYGMLARLAVEAGFDWVYYESKAHIHCSVKAENSVAAKSGGCFPGSATVHLEQGGTKLVKDLRPGDRVLAADDQGRLLYSDFLTFLDRDEGAKKVFYVIETLEPRERLLLTAAHLLFVAPHNDSGPTPGPSALFASRVRPGQRVYVVAERGGDRRLLPAAVHSVTLREEEAGAYAPLTAHGTILINRVLASCYAVIEEHSWAHRAFAPFRLAHALLAALAPARTDGGGGGSIPAAQSATEARGAEPTAGIHWYSQLLYHIGTWLLDSETMHPLGMAVKSS.

Residues 1-24 form the signal peptide; sequence MLLLLARCFLVILASSLLVCPGLA. Residue C25 is the site of N-palmitoyl cysteine attachment. The Cardin-Weintraub signature appears at 33-39; the sequence is KRRHPKK. Residues E90, E91, D96, T126, E127, D130, and D132 each coordinate Ca(2+). Zn(2+) contacts are provided by H141, D148, and H183. Residue G198 is the site of Cholesterol glycine ester attachment. A glycan (N-linked (GlcNAc...) asparagine) is linked at N279.

It belongs to the hedgehog family. As to quaternary structure, interacts with HHATL/GUP1 which negatively regulates HHAT-mediated palmitoylation of the SHH N-terminus. Interacts with BOC and CDON. Interacts with HHIP. Interacts with DISP1 via its cholesterol anchor. Interacts with SCUBE2. Interacts with glypican GPC3. In terms of assembly, multimer. Post-translationally, the C-terminal domain displays an autoproteolysis activity and a cholesterol transferase activity. Both activities result in the cleavage of the full-length protein and covalent attachment of a cholesterol moiety to the C-terminal of the newly generated N-terminal fragment (ShhN). Cholesterylation is required for the sonic hedgehog protein N-product targeting to lipid rafts and multimerization. ShhN is the active species in both local and long-range signaling, whereas the C-product (ShhC) is degraded in the endoplasmic reticulum. N-palmitoylation by HHAT of ShhN is required for sonic hedgehog protein N-product multimerization and full activity. It is a prerequisite for the membrane-proximal positioning and the subsequent shedding of this N-terminal peptide. In terms of processing, the lipidated N- and C-terminal peptides of ShhNp can be cleaved (shedding). The N-terminal palmitoylated peptide is cleaved at the Cardin-Weintraub (CW) motif site. The cleavage reduced the interactions with heparan sulfate. The cleavage is enhanced by SCUBE2. In terms of tissue distribution, expressed in a number of embryonic tissues including the notochord, ventral neural tube, floor plate, lung bud, zone of polarizing activity and posterior distal mesenchyme of limbs. In the adult, expressed in lung and neural retina.

It localises to the endoplasmic reticulum membrane. It is found in the golgi apparatus membrane. Its subcellular location is the cell membrane. It carries out the reaction glycyl-L-cysteinyl-[protein] + cholesterol + H(+) = [protein]-C-terminal glycyl cholesterol ester + N-terminal L-cysteinyl-[protein]. In terms of biological role, the C-terminal part of the sonic hedgehog protein precursor displays an autoproteolysis and a cholesterol transferase activity. Both activities result in the cleavage of the full-length protein into two parts (ShhN and ShhC) followed by the covalent attachment of a cholesterol moiety to the C-terminal of the newly generated ShhN. Both activities occur in the reticulum endoplasmic. Once cleaved, ShhC is degraded in the endoplasmic reticulum. Its function is as follows. The dually lipidated sonic hedgehog protein N-product (ShhNp) is a morphogen which is essential for a variety of patterning events during development. Induces ventral cell fate in the neural tube and somites. Involved in the patterning of the anterior-posterior axis of the developing limb bud. Essential for axon guidance. Binds to the patched (PTCH1) receptor, which functions in association with smoothened (SMO), to activate the transcription of target genes. In the absence of SHH, PTCH1 represses the constitutive signaling activity of SMO. This chain is Sonic hedgehog protein, found in Mus musculus (Mouse).